A 739-amino-acid chain; its full sequence is TonB-dependent heme receptor A (739 aa).

The signal sequence occupies residues 1–22 (MKMKKQCATLTFFIGLHGYTIA). Residues 38–150 (GHHERQPDRS…FAGTIKLETK (113 aa)) form the TBDR plug domain. One can recognise a TBDR beta-barrel domain in the interval 161 to 739 (LLGGLLKYGY…NIKLSISKQF (579 aa)).

The protein belongs to the TonB-dependent receptor family.

The protein resides in the cell outer membrane. Heme receptor. The polypeptide is TonB-dependent heme receptor A (tdhA) (Haemophilus ducreyi (strain 35000HP / ATCC 700724)).